The chain runs to 174 residues: NADPH-dependent 7-cyano-7-deazaguanine reductase (174 aa).

C72 serves as the catalytic Thioimide intermediate. D79 acts as the Proton donor in catalysis. Substrate contacts are provided by residues 94-96 (VES) and 113-114 (HE).

Belongs to the GTP cyclohydrolase I family. QueF type 1 subfamily.

The protein resides in the cytoplasm. The enzyme catalyses 7-aminomethyl-7-carbaguanine + 2 NADP(+) = 7-cyano-7-deazaguanine + 2 NADPH + 3 H(+). It participates in tRNA modification; tRNA-queuosine biosynthesis. Catalyzes the NADPH-dependent reduction of 7-cyano-7-deazaguanine (preQ0) to 7-aminomethyl-7-deazaguanine (preQ1). The protein is NADPH-dependent 7-cyano-7-deazaguanine reductase of Synechococcus elongatus (strain ATCC 33912 / PCC 7942 / FACHB-805) (Anacystis nidulans R2).